The chain runs to 68 residues: ATP synthase F(0) complex subunit 8 (68 aa).

Residues Val-8–Phe-21 traverse the membrane as a helical segment. The residue at position 54 (Lys-54) is an N6-acetyllysine; alternate. Residue Lys-54 is modified to N6-succinyllysine; alternate. Lys-57 carries the N6-acetyllysine modification.

It belongs to the ATPase protein 8 family. In terms of assembly, component of the ATP synthase complex composed at least of ATP5F1A/subunit alpha, ATP5F1B/subunit beta, ATP5MC1/subunit c (homooctomer), MT-ATP6/subunit a, MT-ATP8/subunit 8, ATP5ME/subunit e, ATP5MF/subunit f, ATP5MG/subunit g, ATP5MK/subunit k, ATP5MJ/subunit j, ATP5F1C/subunit gamma, ATP5F1D/subunit delta, ATP5F1E/subunit epsilon, ATP5PF/subunit F6, ATP5PB/subunit b, ATP5PD/subunit d, ATP5PO/subunit OSCP. ATP synthase complex consists of a soluble F(1) head domain (subunits alpha(3) and beta(3)) - the catalytic core - and a membrane F(0) domain - the membrane proton channel (subunits c, a, 8, e, f, g, k and j). These two domains are linked by a central stalk (subunits gamma, delta, and epsilon) rotating inside the F1 region and a stationary peripheral stalk (subunits F6, b, d, and OSCP). Interacts with PRICKLE3.

The protein resides in the mitochondrion membrane. Functionally, subunit 8, of the mitochondrial membrane ATP synthase complex (F(1)F(0) ATP synthase or Complex V) that produces ATP from ADP in the presence of a proton gradient across the membrane which is generated by electron transport complexes of the respiratory chain. ATP synthase complex consist of a soluble F(1) head domain - the catalytic core - and a membrane F(1) domain - the membrane proton channel. These two domains are linked by a central stalk rotating inside the F(1) region and a stationary peripheral stalk. During catalysis, ATP synthesis in the catalytic domain of F(1) is coupled via a rotary mechanism of the central stalk subunits to proton translocation. In vivo, can only synthesize ATP although its ATP hydrolase activity can be activated artificially in vitro. Part of the complex F(0) domain. This chain is ATP synthase F(0) complex subunit 8, found in Homo sapiens (Human).